The primary structure comprises 598 residues: Rho-related protein racA (598 aa).

Position 11 to 17 (11 to 17) interacts with GTP; the sequence is DGAVGKS. Positions 32–40 match the Effector region motif; that stretch reads YVPTVFDNY. Residues 57–61 and 115–118 each bind GTP; these read DTAGQ and TKND. The interval 175–210 is disordered; that stretch reads ASAKKKGGFFSSSSSSSSSSSSKSSEKSVPIPPVMP. A compositionally biased stretch (low complexity) spans 182-197; the sequence is GFFSSSSSSSSSSSSK. 2 consecutive BTB domains span residues 239-344 and 405-472; these read SDVK…NYLD and SDIQ…PIEE.

In the N-terminal section; belongs to the small GTPase superfamily. Rho family. In terms of assembly, interacts with pakB.

This chain is Rho-related protein racA (racA), found in Dictyostelium discoideum (Social amoeba).